The primary structure comprises 198 residues: Nucleoside triphosphate pyrophosphatase (198 aa).

Asp74 acts as the Proton acceptor in catalysis.

It belongs to the Maf family. A divalent metal cation serves as cofactor.

It is found in the cytoplasm. It carries out the reaction a ribonucleoside 5'-triphosphate + H2O = a ribonucleoside 5'-phosphate + diphosphate + H(+). The catalysed reaction is a 2'-deoxyribonucleoside 5'-triphosphate + H2O = a 2'-deoxyribonucleoside 5'-phosphate + diphosphate + H(+). Nucleoside triphosphate pyrophosphatase. May have a dual role in cell division arrest and in preventing the incorporation of modified nucleotides into cellular nucleic acids. This is Nucleoside triphosphate pyrophosphatase from Sphingopyxis alaskensis (strain DSM 13593 / LMG 18877 / RB2256) (Sphingomonas alaskensis).